The chain runs to 303 residues: tRNA pseudouridine synthase B (303 aa).

The Nucleophile role is filled by D47.

It belongs to the pseudouridine synthase TruB family. Type 1 subfamily.

The enzyme catalyses uridine(55) in tRNA = pseudouridine(55) in tRNA. Functionally, responsible for synthesis of pseudouridine from uracil-55 in the psi GC loop of transfer RNAs. In Ruegeria pomeroyi (strain ATCC 700808 / DSM 15171 / DSS-3) (Silicibacter pomeroyi), this protein is tRNA pseudouridine synthase B.